The chain runs to 234 residues: Fibrillarin-like rRNA/tRNA 2'-O-methyltransferase (234 aa).

S-adenosyl-L-methionine contacts are provided by residues 91-92, 110-111, 137-138, and 157-160; these read TT, EF, DA, and DVAQ.

It belongs to the methyltransferase superfamily. Fibrillarin family. As to quaternary structure, interacts with nop5. Component of box C/D small ribonucleoprotein (sRNP) particles that contain rpl7ae, FlpA and nop5, plus a guide RNA.

Involved in pre-rRNA and tRNA processing. Utilizes the methyl donor S-adenosyl-L-methionine to catalyze the site-specific 2'-hydroxyl methylation of ribose moieties in rRNA and tRNA. Site specificity is provided by a guide RNA that base pairs with the substrate. Methylation occurs at a characteristic distance from the sequence involved in base pairing with the guide RNA. The polypeptide is Fibrillarin-like rRNA/tRNA 2'-O-methyltransferase (Pyrobaculum calidifontis (strain DSM 21063 / JCM 11548 / VA1)).